The following is a 575-amino-acid chain: Epsin-1 (575 aa).

A 1,2-diacyl-sn-glycero-3-phospho-(1D-myo-inositol-4,5-bisphosphate) is bound by residues Lys11, Arg25, Asn30, Arg63, and His73. The ENTH domain maps to Asn12–Arg144. Residues Thr150 to Leu186 form a disordered region. Positions Thr157 to Ser167 are enriched in low complexity. UIM domains lie at Glu183–Pro202, Glu208–Glu227, and Gly233–Lys252. Positions Phe264–Leu575 are disordered. Tandem repeats lie at residues Asp274 to Trp276, Asp294 to Trp296, Asp306 to Trp308, Asp319 to Trp321, Asp332 to Trp334, Asp349 to Trp351, Asp367 to Trp369, and Asp377 to Trp379. Positions Asp274 to Trp379 are 8 X 3 AA repeats of D-P-W. Composition is skewed to low complexity over residues Pro279–Pro299 and Asp306–Ala316. A compositionally biased stretch (low complexity) spans Asp332 to Pro346. The span at Asp367–Trp379 shows a compositional bias: low complexity. Residue Ser382 is modified to Phosphoserine. The [DE]-X(1,2)-F-X-X-[FL]-X-X-X-R motif motif lies at Asp401–Arg410. Phosphoserine is present on residues Ser418 and Ser419. Thr420 carries the post-translational modification Phosphothreonine. Residues Ser434, Ser446, and Ser453 each carry the phosphoserine modification. Residues Ser453–Arg467 are compositionally biased toward pro residues. Phosphothreonine occurs at positions 459, 463, and 469. At Ser472 the chain carries Phosphoserine. Thr493 is subject to Phosphothreonine. A run of 2 repeats spans residues Asn501–Phe503 and Asn517–Phe519. Residues Asn501–Phe573 form a 3 X 3 AA repeats of N-P-F region. Arg533 carries the omega-N-methylarginine modification. Residues Gly556 to Asn569 show a composition bias toward pro residues. Residues Asn571–Phe573 form repeat 3.

The protein belongs to the epsin family. In terms of assembly, monomer. Binds clathrin and ZBTB16/ZNF145. Binds ubiquitinated proteins. Interacts with RALBP1 in a complex also containing NUMB and TFAP2A during interphase and mitosis. Interacts with AP2B1. Interacts with UBQLN2. Interacts with ITSN1. Interacts with AP2A1 and AP2A2. Interacts with REPS2; the interaction is direct. Interacts with EPS15; the interaction is direct. Interacts with ENTREP1. In terms of processing, phosphorylated on serine and/or threonine residues in mitotic cells. Phosphorylation reduces interaction with REPS2, AP-2 and the membrane fraction. Depolarization of synaptosomes results in dephosphorylation. Post-translationally, ubiquitinated.

The protein resides in the cytoplasm. Its subcellular location is the cell membrane. The protein localises to the nucleus. It localises to the membrane. It is found in the clathrin-coated pit. Its function is as follows. Binds to membranes enriched in phosphatidylinositol 4,5-bisphosphate (PtdIns(4,5)P2). Modifies membrane curvature and facilitates the formation of clathrin-coated invaginations. Regulates receptor-mediated endocytosis. In Mus musculus (Mouse), this protein is Epsin-1 (Epn1).